The following is a 775-amino-acid chain: Tyrosine-protein phosphatase non-receptor type 12 (775 aa).

M1 carries the N-acetylmethionine modification. S19 carries the post-translational modification Phosphoserine. In terms of domain architecture, Tyrosine-protein phosphatase spans F28–L293. Substrate is bound by residues D199, C231–R237, and Q278. The Phosphocysteine intermediate role is filled by C231. A disordered region spans residues S322–S341. Phosphoserine occurs at positions 331, 434, 448, and 467. The tract at residues V344–I437 is interaction with TGFB1I1. A disordered region spans residues K462–T775. Phosphothreonine is present on T519. 2 positions are modified to phosphoserine: S550 and S567. The segment covering N558–T573 has biased composition (polar residues). A Phosphothreonine modification is found at T569. S596 bears the Phosphoserine mark. Phosphothreonine is present on T598. S603, S606, S608, and S613 each carry phosphoserine. Residues T622–A640 show a composition bias toward low complexity. The residue at position 673 (S673) is a Phosphoserine. The segment covering V692–E711 has biased composition (basic and acidic residues). The residue at position 748 (S748) is a Phosphoserine. Over residues G766–T775 the composition is skewed to basic and acidic residues.

It belongs to the protein-tyrosine phosphatase family. Non-receptor class 4 subfamily. Interacts with PSTPIP1 and TGFB1I1. Interacts with PTK2B/PYK2. Interacts with LPXN. Interacts with SORBS2; this interaction greatly enhances WASF1 dephosphorylation and might mediate partial translocation to focal adhesion sites. Post-translationally, phosphorylated by STK24/MST3 and this results in inhibition of its activity.

It localises to the cytoplasm. It is found in the cell junction. Its subcellular location is the focal adhesion. The protein resides in the cell projection. The protein localises to the podosome. The catalysed reaction is O-phospho-L-tyrosyl-[protein] + H2O = L-tyrosyl-[protein] + phosphate. Its function is as follows. Dephosphorylates a range of proteins, and thereby regulates cellular signaling cascades. Dephosphorylates cellular tyrosine kinases, such as ERBB2 and PTK2B/PYK2, and thereby regulates signaling via ERBB2 and PTK2B/PYK2. Selectively dephosphorylates ERBB2 phosphorylated at 'Tyr-1112', 'Tyr-1196', and/or 'Tyr-1248'. This chain is Tyrosine-protein phosphatase non-receptor type 12 (Ptpn12), found in Mus musculus (Mouse).